Consider the following 752-residue polypeptide: MASYFPPGAASSHVSTRSSSPASSPLSPPAQQRSNALSNRLTSVLSASYADSDIRDALETLSLRGIHNTAEVRRQLRLDVQKEVVDSNAEIVRDFGKVAEQLKRIGTVISSLNQTCEEMKKHIVLAKQDTTPVLEEAASLMNQKREAETKQQLLDAFTKHFIVSEEDLLILTSAEEPIDERFFDLLSRVKQVHRDCEVLLGGENQRLGLELMEKSSRNLNSAYQKLYKWIQKEFRSLNLEDPRISSSIRRALRVLAERPSLFHSCLDFFAEARDYVLSDAFHYALTDAVTGAGGDNVKPIEFSAHDPLRYIGDMLAWVHSTTVSEREALESLFVADGEELAKGIQAGLNSEPWSRLDEDETVSFDGQKALSDLVNRDLTGVSRSLRQRVELVIQGHDDPVTCYKVANLLSFYRGTFSKLLGPRSNLADLLETLEKFTLRHFETLMRNQVNTLSADHAALIPSDDLSAPEFLQDALDVLTALMKTHEASFGADVSTDDGDNDSVNRFAPVLRAALDPFLELAKSTADELPNPTARAIYLTNIHLTTRSTIAAYPFASATHLTPLSTALSSLRVDLLAIQHRYLLDASGLQVLLAALEPFSPSSTNGPSDTANDGQQQKQPQPDIADIANLPAFQPDALVATSQQLDDFLPSALMDATDNLKRVQNASFAKSVTEEAVEAFCRDFEFVEGMIIGADEARAKVDVTRDRAVEDDSASDSDKDKDEDGDEDEDAEKGLGLRRLFPRTTGEIRVLLS.

3 disordered regions span residues 1-36 (MASY…RSNA), 601-620 (SSTN…KQPQ), and 702-736 (VTRD…GLGL). Residues 9–25 (AASSHVSTRSSSPASSP) are compositionally biased toward low complexity. The segment covering 601–619 (SSTNGPSDTANDGQQQKQP) has biased composition (polar residues). Residues 702-721 (VTRDRAVEDDSASDSDKDKD) show a composition bias toward basic and acidic residues.

This sequence belongs to the COG6 family.

It is found in the golgi apparatus membrane. Functionally, acts as a component of the peripheral membrane COG complex that is involved in intra-Golgi protein trafficking. COG is located at the cis-Golgi, and regulates tethering of retrograde intra-Golgi vesicles and possibly a number of other membrane trafficking events. The polypeptide is Conserved oligomeric Golgi complex subunit 6 (cog6) (Aspergillus terreus (strain NIH 2624 / FGSC A1156)).